The sequence spans 75 residues: Beta-defensin 30 (75 aa).

The N-terminal stretch at 1 to 22 (MGSLQLTLVLFVLLSYVPPVRS) is a signal peptide. Cystine bridges form between cysteine 35–cysteine 62, cysteine 42–cysteine 56, and cysteine 46–cysteine 63.

Belongs to the beta-defensin family.

It is found in the secreted. Has antibacterial activity. The sequence is that of Beta-defensin 30 (Defb30) from Mus musculus (Mouse).